The primary structure comprises 142 residues: Large ribosomal subunit protein uL13 (142 aa).

Belongs to the universal ribosomal protein uL13 family. Part of the 50S ribosomal subunit.

This protein is one of the early assembly proteins of the 50S ribosomal subunit, although it is not seen to bind rRNA by itself. It is important during the early stages of 50S assembly. The sequence is that of Large ribosomal subunit protein uL13 from Serratia proteamaculans (strain 568).